The following is a 561-amino-acid chain: Formate--tetrahydrofolate ligase (561 aa).

70–77 (TPAGEGKT) contacts ATP.

The protein belongs to the formate--tetrahydrofolate ligase family.

The catalysed reaction is (6S)-5,6,7,8-tetrahydrofolate + formate + ATP = (6R)-10-formyltetrahydrofolate + ADP + phosphate. The protein operates within one-carbon metabolism; tetrahydrofolate interconversion. The chain is Formate--tetrahydrofolate ligase from Pelagibacter ubique (strain HTCC1062).